Here is a 388-residue protein sequence, read N- to C-terminus: Succinate--CoA ligase [ADP-forming] subunit beta (388 aa).

Residues 9-244 (KEILRKFGVA…PDEEDPKETQ (236 aa)) enclose the ATP-grasp domain. Residues lysine 46, 53-55 (GRG), glutamate 99, cysteine 102, and glutamate 107 contribute to the ATP site. Positions 199 and 213 each coordinate Mg(2+). Substrate contacts are provided by residues asparagine 264 and 321-323 (GIM).

It belongs to the succinate/malate CoA ligase beta subunit family. Heterotetramer of two alpha and two beta subunits. Requires Mg(2+) as cofactor.

The catalysed reaction is succinate + ATP + CoA = succinyl-CoA + ADP + phosphate. It carries out the reaction GTP + succinate + CoA = succinyl-CoA + GDP + phosphate. Its pathway is carbohydrate metabolism; tricarboxylic acid cycle; succinate from succinyl-CoA (ligase route): step 1/1. In terms of biological role, succinyl-CoA synthetase functions in the citric acid cycle (TCA), coupling the hydrolysis of succinyl-CoA to the synthesis of either ATP or GTP and thus represents the only step of substrate-level phosphorylation in the TCA. The beta subunit provides nucleotide specificity of the enzyme and binds the substrate succinate, while the binding sites for coenzyme A and phosphate are found in the alpha subunit. This is Succinate--CoA ligase [ADP-forming] subunit beta from Anaeromyxobacter dehalogenans (strain 2CP-1 / ATCC BAA-258).